A 633-amino-acid polypeptide reads, in one-letter code: MNSVLNSGRTTICDAYNVVAHDPFSFEHKSLDTIQKEWMEWKRTDHSLYVAPVVGTVSSFLLKKVGSLIGKRILSELWGIIFPSGSTNLMQDILRETEQFLNQRLNTDTLARVNAELIGLQANIREFNQQVDNFLNPTQNPVPLSITSSVNTMQQLFLNRLPQFQIQGYQLLLLPLFAQAANMHLSFIRDVILNADEWGISAATLRTYRDYLRNYTRDYSNYCINTYQTAFRGLNTRLHDMLEFRTYMFLNVFEYVSIWSLFKYQSLMVSSGANLYASGSGPQQTQSFTAQNWPFLYSLFQVNSNYILSGISGTRLSITFPNIGGLPGSTTTHSLNSARVNYSGGVSSGLIGATNLNHNFNCSTVLPPLSTPFVRSWLDSGTDREGVATSTNWQTESFQTTLSLRCGASSARGNSNYFPDYFIRNISGVPLVIRNEDLTRPLHYNQIRNIESPSGTPGGARAYLVSVHNRKNNIYAANENGTMIHLAPEDYTGFTISPIHATQVNNQTRTFISEKFGNQGDSLRFEQSNTTARYTLRGNGSSYNLYLRVSSIGNSTIRVTINGRVYTVSNVNTTTNNDGVNDNGARFPDINIGNIVASDNTNVTLDINVTLNSGTPFDLMNIMFVPTNLPPLY.

It belongs to the delta endotoxin family.

Functionally, promotes colloidosmotic lysis by binding to the midgut epithelial cells of both dipteran (Aedes aegypti) and lepidopteran (Manduca sexta) larvae. The sequence is that of Pesticidal crystal protein Cry2Aa (cry2Aa) from Bacillus thuringiensis subsp. kenyae.